The primary structure comprises 1002 residues: UPF0182 protein Mvan_1814 (1002 aa).

Helical transmembrane passes span 16–36 (VMIA…RLVD), 61–81 (LLLF…AMAL), 112–132 (LVGI…AQNY), 174–194 (FAAT…FGGI), 209–229 (IQLI…YWLD), 258–278 (KLIL…AIVL), and 286–306 (IGVV…PLVV). Residues 891–958 (LFGPGADATA…TGPTQLSAGK (68 aa)) are disordered. Positions 893-923 (GPGADATATGPAATEPPAGQAPQPQGNNQPP) are enriched in low complexity. The span at 937-950 (PQQPEVPVAVPPTG) shows a compositional bias: pro residues.

It belongs to the UPF0182 family.

The protein localises to the cell membrane. The chain is UPF0182 protein Mvan_1814 from Mycolicibacterium vanbaalenii (strain DSM 7251 / JCM 13017 / BCRC 16820 / KCTC 9966 / NRRL B-24157 / PYR-1) (Mycobacterium vanbaalenii).